The chain runs to 198 residues: Peroxiredoxin-2 (198 aa).

Ala2 is modified (N-acetylalanine). The 159-residue stretch at 6–164 folds into the Thioredoxin domain; that stretch reads AQIGKSAPDF…ALRLVQAFQY (159 aa). A Phosphoserine modification is found at Ser11. Cys51 (cysteine sulfenic acid (-SOH) intermediate) is an active-site residue. At Ser112 the chain carries Phosphoserine. Thr182 carries the phosphothreonine modification. Lys196 is modified (N6-acetyllysine).

It belongs to the peroxiredoxin family. AhpC/Prx1 subfamily. In terms of assembly, homodimer; disulfide-linked, upon oxidation. 5 homodimers assemble to form a ring-like decamer. Interacts with TIPIN. Post-translationally, the enzyme can be inactivated by further oxidation of the cysteine sulfenic acid (C(P)-SOH) to sulphinic acid (C(P)-SO2H) instead of its condensation to a disulfide bond. It can be reactivated by forming a transient disulfide bond with sulfiredoxin SRXN1, which reduces the cysteine sulfinic acid in an ATP- and Mg-dependent manner. Acetylation increases resistance to transition to high molecular-mass complexes. Deacetylated by HDAC6 which decreases reducing activity. In terms of tissue distribution, widely expressed with highest levels in bone marrow. High levels also found in heart, brain, kidney and skeletal muscle. Lower levels in liver, lung and thymus.

It localises to the cytoplasm. The enzyme catalyses a hydroperoxide + [thioredoxin]-dithiol = an alcohol + [thioredoxin]-disulfide + H2O. Thiol-specific peroxidase that catalyzes the reduction of hydrogen peroxide and organic hydroperoxides to water and alcohols, respectively. Plays a role in cell protection against oxidative stress by detoxifying peroxides and as sensor of hydrogen peroxide-mediated signaling events. Might participate in the signaling cascades of growth factors and tumor necrosis factor-alpha by regulating the intracellular concentrations of H(2)O(2). This is Peroxiredoxin-2 (Prdx2) from Mus musculus (Mouse).